Here is a 68-residue protein sequence, read N- to C-terminus: DNA-directed RNA polymerase subunit Rpo10 (68 aa).

Zn(2+) is bound by residues Cys-7, Cys-10, Cys-44, and Cys-45.

It belongs to the archaeal Rpo10/eukaryotic RPB10 RNA polymerase subunit family. As to quaternary structure, part of the RNA polymerase complex. Zn(2+) serves as cofactor.

The protein localises to the cytoplasm. The catalysed reaction is RNA(n) + a ribonucleoside 5'-triphosphate = RNA(n+1) + diphosphate. Functionally, DNA-dependent RNA polymerase (RNAP) catalyzes the transcription of DNA into RNA using the four ribonucleoside triphosphates as substrates. In Methanococcus maripaludis (strain C7 / ATCC BAA-1331), this protein is DNA-directed RNA polymerase subunit Rpo10.